Consider the following 255-residue polypeptide: Fe(3+) dicitrate transport ATP-binding protein FecE (255 aa).

Residues 3–238 form the ABC transporter domain; the sequence is LRTENLTVSY…GLLRTVFSVE (236 aa). 35–42 lines the ATP pocket; the sequence is GPNGCGKS.

This sequence belongs to the ABC transporter superfamily. As to quaternary structure, the complex is composed of two ATP-binding proteins (FecE), two transmembrane proteins (FecC and FecD) and a solute-binding protein (FecB).

The protein resides in the cell inner membrane. The catalysed reaction is iron(III) dicitrate(out) + ATP + H2O = iron(III) dicitrate(in) + ADP + phosphate + H(+). Part of the ABC transporter complex FecBCDE involved in citrate-dependent Fe(3+) uptake. Binds ATP. Probably responsible for energy coupling to the transport system. This chain is Fe(3+) dicitrate transport ATP-binding protein FecE, found in Escherichia coli (strain K12).